Consider the following 219-residue polypeptide: Probable GTP-binding protein EngB (219 aa).

An EngB-type G domain is found at 31–205; that stretch reads VGVEIAFAGR…LSILNEWCHP (175 aa). GTP contacts are provided by residues 39–46, 66–70, 84–87, 151–154, and 184–186; these read GRSNAGKS, GRTQL, DLPG, TKSD, and FSA. S46 and T68 together coordinate Mg(2+).

Belongs to the TRAFAC class TrmE-Era-EngA-EngB-Septin-like GTPase superfamily. EngB GTPase family. The cofactor is Mg(2+).

Functionally, necessary for normal cell division and for the maintenance of normal septation. The protein is Probable GTP-binding protein EngB of Shewanella sp. (strain ANA-3).